Consider the following 285-residue polypeptide: V-set and transmembrane domain-containing protein 2B (285 aa).

The N-terminal stretch at 1 to 28 is a signal peptide; that stretch reads MEQRNRLGALGYLPPLLLHALLLFVADA. One can recognise an Ig-like V-type domain in the interval 29 to 143; that stretch reads AFTEVPKDVT…DDDTQEHKAQ (115 aa). Residues 29-263 are Extracellular-facing; sequence AFTEVPKDVT…HGSGTGRSYT (235 aa). Residues C49 and C127 are joined by a disulfide bond. The tract at residues 161-226 is disordered; it reads EAVSHIQSSG…EAAAASAAHT (66 aa). Low complexity-rich tracts occupy residues 177–189 and 208–226; these read ASAANANNAGAAS and PAAIDPAVPEAAAASAAHT. Residues 264–284 traverse the membrane as a helical segment; the sequence is TDPLLSLLLLALHKFLRLLLG. Position 285 (H285) is a topological domain, cytoplasmic.

It localises to the membrane. This chain is V-set and transmembrane domain-containing protein 2B (VSTM2B), found in Homo sapiens (Human).